The following is a 283-amino-acid chain: tRNA-cytidine(32) 2-sulfurtransferase (283 aa).

The PP-loop motif motif lies at 37–42; it reads SGGKDS. Positions 112, 115, and 203 each coordinate [4Fe-4S] cluster.

This sequence belongs to the TtcA family. As to quaternary structure, homodimer. Mg(2+) is required as a cofactor. Requires [4Fe-4S] cluster as cofactor.

The protein localises to the cytoplasm. The catalysed reaction is cytidine(32) in tRNA + S-sulfanyl-L-cysteinyl-[cysteine desulfurase] + AH2 + ATP = 2-thiocytidine(32) in tRNA + L-cysteinyl-[cysteine desulfurase] + A + AMP + diphosphate + H(+). It participates in tRNA modification. In terms of biological role, catalyzes the ATP-dependent 2-thiolation of cytidine in position 32 of tRNA, to form 2-thiocytidine (s(2)C32). The sulfur atoms are provided by the cysteine/cysteine desulfurase (IscS) system. This Legionella pneumophila subsp. pneumophila (strain Philadelphia 1 / ATCC 33152 / DSM 7513) protein is tRNA-cytidine(32) 2-sulfurtransferase.